A 341-amino-acid chain; its full sequence is Ketol-acid reductoisomerase (NADP(+)) (341 aa).

The region spanning 2 to 181 (AKVYYNGDVN…GAARAGVLET (180 aa)) is the KARI N-terminal Rossmann domain. NADP(+)-binding positions include 25–28 (YGSQ), Arg48, Ser52, and 82–85 (DEHQ). His107 is a catalytic residue. Gly133 lines the NADP(+) pocket. Residues 182–327 (TFKEETETDL…RELREMMPFV (146 aa)) enclose the KARI C-terminal knotted domain. Asp190, Glu194, Glu226, and Glu230 together coordinate Mg(2+). Ser251 serves as a coordination point for substrate.

Belongs to the ketol-acid reductoisomerase family. The cofactor is Mg(2+).

It carries out the reaction (2R)-2,3-dihydroxy-3-methylbutanoate + NADP(+) = (2S)-2-acetolactate + NADPH + H(+). The catalysed reaction is (2R,3R)-2,3-dihydroxy-3-methylpentanoate + NADP(+) = (S)-2-ethyl-2-hydroxy-3-oxobutanoate + NADPH + H(+). It participates in amino-acid biosynthesis; L-isoleucine biosynthesis; L-isoleucine from 2-oxobutanoate: step 2/4. Its pathway is amino-acid biosynthesis; L-valine biosynthesis; L-valine from pyruvate: step 2/4. Its function is as follows. Involved in the biosynthesis of branched-chain amino acids (BCAA). Catalyzes an alkyl-migration followed by a ketol-acid reduction of (S)-2-acetolactate (S2AL) to yield (R)-2,3-dihydroxy-isovalerate. In the isomerase reaction, S2AL is rearranged via a Mg-dependent methyl migration to produce 3-hydroxy-3-methyl-2-ketobutyrate (HMKB). In the reductase reaction, this 2-ketoacid undergoes a metal-dependent reduction by NADPH to yield (R)-2,3-dihydroxy-isovalerate. This chain is Ketol-acid reductoisomerase (NADP(+)), found in Shouchella clausii (strain KSM-K16) (Alkalihalobacillus clausii).